Reading from the N-terminus, the 233-residue chain is Small ribosomal subunit protein uS2c (233 aa).

The protein belongs to the universal ribosomal protein uS2 family.

It is found in the plastid. Its subcellular location is the apicoplast. The chain is Small ribosomal subunit protein uS2c from Toxoplasma gondii.